Reading from the N-terminus, the 893-residue chain is Nitrate reductase [NADPH] (893 aa).

The disordered stretch occupies residues 1-83 (MSVTTQQPAV…KPTPDAHVPR (83 aa)). The segment covering 55–65 (PDFPLPPPANP) has biased composition (pro residues). A compositionally biased stretch (basic and acidic residues) spans 71-83 (DIDKPTPDAHVPR). Cys-170 serves as a coordination point for Mo-molybdopterin. In terms of domain architecture, Cytochrome b5 heme-binding spans 536 to 611 (NRIVELDELK…MPAYHIGTLS (76 aa)). Residues His-571 and His-594 each contribute to the heme site. An FAD-binding FR-type domain is found at 641-752 (RTWSKALLSS…KGPIGKFEYL (112 aa)). Residues 695-698 (RSYT), 712-716 (LIKIY), 726-728 (KMT), Ser-776, and Thr-779 each bind FAD. NADP(+) is bound at residue 863–872 (LVLVCGPEGL).

This sequence belongs to the nitrate reductase family. In terms of assembly, homodimer. The cofactor is FAD. Heme is required as a cofactor. Mo-molybdopterin serves as cofactor.

The catalysed reaction is nitrite + NADP(+) + H2O = nitrate + NADPH + H(+). Functionally, nitrate reductase is a key enzyme involved in the first step of nitrate assimilation in plants, fungi and bacteria. The chain is Nitrate reductase [NADPH] (NIAD) from Leptosphaeria maculans (Blackleg fungus).